We begin with the raw amino-acid sequence, 161 residues long: UPF0225 protein HI_0277 (161 aa).

Belongs to the UPF0225 family.

The polypeptide is UPF0225 protein HI_0277 (Haemophilus influenzae (strain ATCC 51907 / DSM 11121 / KW20 / Rd)).